A 377-amino-acid chain; its full sequence is Alanine dehydrogenase (377 aa).

Residues R15 and K74 each coordinate substrate. H95 serves as the catalytic Proton donor/acceptor. NAD(+)-binding positions include S133, D197, R202, S219, 238–239 (VL), 266–269 (VAID), and 304–307 (VGNM). Residue D269 is the Proton donor/acceptor of the active site.

The protein belongs to the AlaDH/PNT family. In terms of assembly, homohexamer.

The enzyme catalyses L-alanine + NAD(+) + H2O = pyruvate + NH4(+) + NADH + H(+). Its pathway is organosulfur degradation; alkanesulfonate degradation. Functionally, involved in an anaerobic respiration pathway that converts the sulfonate taurine (2-aminoethanesulfonate) to ammonia, acetate and sulfide. Acts as an alanine dehydrogenase that regenerates pyruvate, the amino group acceptor for the taurine--pyruvate aminotransferase enzyme, and liberates ammonia. The sequence is that of Alanine dehydrogenase from Bilophila wadsworthia (strain 3_1_6).